The sequence spans 859 residues: Fanconi anemia group B protein (859 aa).

At Thr2 the chain carries N-acetylthreonine.

Belongs to the multisubunit FA complex composed of FANCA, FANCB, FANCC, FANCE, FANCF, FANCG, FANCL/PHF9 and FANCM. The complex is not found in FA patients.

The protein resides in the nucleus. Its function is as follows. DNA repair protein required for FANCD2 ubiquitination. The polypeptide is Fanconi anemia group B protein (FANCB) (Homo sapiens (Human)).